A 580-amino-acid polypeptide reads, in one-letter code: uncharacterized protein (580 aa).

Residues 1–44 (MSESSVNADTPKNTNDVLNGAYQSATTEPEGQYRSATDNPSLYQ) show a composition bias toward polar residues. The interval 1-45 (MSESSVNADTPKNTNDVLNGAYQSATTEPEGQYRSATDNPSLYQV) is disordered. Position 99 is a phosphoserine (serine 99). 12 helical membrane-spanning segments follow: residues 143-163 (IYAY…PASA), 177-197 (LLNV…WAPM), 207-227 (LYIG…AQDI), 235-255 (FFGG…FADM), 265-285 (ITIF…VGGF), 295-315 (WTEY…YLFC), 370-390 (PIVF…YLLL), 405-425 (LGVS…GCGI), 450-470 (LPPM…LAWS), 476-496 (VHWI…LLIF), 511-533 (AASV…PLFA), and 546-566 (GSLL…FFFF).

The protein belongs to the major facilitator superfamily. CAR1 family.

Its subcellular location is the membrane. This is an uncharacterized protein from Schizosaccharomyces pombe (strain 972 / ATCC 24843) (Fission yeast).